The primary structure comprises 303 residues: Indole-3-glycerol phosphate synthase (303 aa).

This sequence belongs to the TrpC family.

The catalysed reaction is 1-(2-carboxyphenylamino)-1-deoxy-D-ribulose 5-phosphate + H(+) = (1S,2R)-1-C-(indol-3-yl)glycerol 3-phosphate + CO2 + H2O. It participates in amino-acid biosynthesis; L-tryptophan biosynthesis; L-tryptophan from chorismate: step 4/5. The polypeptide is Indole-3-glycerol phosphate synthase (Acaryochloris marina (strain MBIC 11017)).